Reading from the N-terminus, the 510-residue chain is Nucleosome assembly protein 1-like 3 (510 aa).

Disordered stretches follow at residues 1–99 (MAEA…LGTN) and 161–311 (PTEE…KRED). Positions 35–74 (SSSSSSSTSGSSSSSSTSGSSSSSGSGSSSSSSGSGSTSS) are enriched in low complexity. The segment covering 161–182 (PTEEECEWNSEDEEFSSDEEVQ) has biased composition (acidic residues). Composition is skewed to basic and acidic residues over residues 200–229 (PKEN…EVPK), 235–246 (KAEEKADSKDCM), and 254–300 (EDPK…VDLK).

Belongs to the nucleosome assembly protein (NAP) family.

It is found in the nucleus. In Pongo abelii (Sumatran orangutan), this protein is Nucleosome assembly protein 1-like 3 (NAP1L3).